Consider the following 929-residue polypeptide: Protein translocase subunit SecA (929 aa).

ATP-binding positions include glutamine 83, glycine 101–threonine 105, and aspartate 491.

This sequence belongs to the SecA family. As to quaternary structure, monomer and homodimer. Part of the essential Sec protein translocation apparatus which comprises SecA, SecYEG and auxiliary proteins SecDF. Other proteins may also be involved.

Its subcellular location is the cell inner membrane. The protein resides in the cellular thylakoid membrane. It is found in the cytoplasm. The catalysed reaction is ATP + H2O + cellular proteinSide 1 = ADP + phosphate + cellular proteinSide 2.. Part of the Sec protein translocase complex. Interacts with the SecYEG preprotein conducting channel. Has a central role in coupling the hydrolysis of ATP to the transfer of proteins into and across the cell membrane, serving as an ATP-driven molecular motor driving the stepwise translocation of polypeptide chains across the membrane. Functionally, probably participates in protein translocation into and across both the cytoplasmic and thylakoid membranes in cyanobacterial cells. The sequence is that of Protein translocase subunit SecA from Thermosynechococcus vestitus (strain NIES-2133 / IAM M-273 / BP-1).